Reading from the N-terminus, the 431-residue chain is Galactose-3-O-sulfotransferase 3 (431 aa).

Residues 1 to 19 (MPPILQRLQQSTKMMSHRK) are Cytoplasmic-facing. The chain crosses the membrane as a helical; Signal-anchor for type II membrane protein span at residues 20–40 (ILLLVLGCSTVSLLIHQGSQL). The Lumenal segment spans residues 41–431 (SWYPKLFPLS…RALPRIPQGT (391 aa)). 4 N-linked (GlcNAc...) asparagine glycosylation sites follow: Asn-91, Asn-110, Asn-177, and Asn-302. Residues 400 to 431 (KRRGGVRSRPESVLDNPPPRPIRALPRIPQGT) are disordered. Over residues 421 to 431 (IRALPRIPQGT) the composition is skewed to low complexity.

This sequence belongs to the galactose-3-O-sulfotransferase family. Requires Mg(2+) as cofactor.

It localises to the golgi apparatus. It is found in the golgi stack membrane. The protein operates within protein modification; carbohydrate sulfation. Transfers a sulfate to position 3 of non-reducing beta-galactosyl residues in N-glycans and core2-branched O-glycans. Has high activity towards Gal-beta-1,4-GlcNAc, Gal-beta-1,4(Fuc-alpha-1,3)GlcNAc and lower activity towards Gal-beta-1,3(Fuc-alpha-1,4)GlcNAc. The polypeptide is Galactose-3-O-sulfotransferase 3 (Gal3st3) (Mus musculus (Mouse)).